We begin with the raw amino-acid sequence, 204 residues long: Guanylate kinase (204 aa).

Residues 18-198 (GKLIIFSAPS…AKAETLEVIK (181 aa)) enclose the Guanylate kinase-like domain. 25 to 32 (APSGSGKS) contacts ATP.

It belongs to the guanylate kinase family.

The protein localises to the cytoplasm. It catalyses the reaction GMP + ATP = GDP + ADP. Its function is as follows. Essential for recycling GMP and indirectly, cGMP. The sequence is that of Guanylate kinase from Bacteroides thetaiotaomicron (strain ATCC 29148 / DSM 2079 / JCM 5827 / CCUG 10774 / NCTC 10582 / VPI-5482 / E50).